The primary structure comprises 294 residues: Elongation factor Ts (294 aa).

The interval 78–81 is involved in Mg(2+) ion dislocation from EF-Tu; that stretch reads TDFV.

This sequence belongs to the EF-Ts family.

The protein resides in the cytoplasm. Functionally, associates with the EF-Tu.GDP complex and induces the exchange of GDP to GTP. It remains bound to the aminoacyl-tRNA.EF-Tu.GTP complex up to the GTP hydrolysis stage on the ribosome. The protein is Elongation factor Ts of Mycoplasma mobile (strain ATCC 43663 / 163K / NCTC 11711) (Mesomycoplasma mobile).